Here is a 331-residue protein sequence, read N- to C-terminus: Reticulocalbin-1 (331 aa).

The signal sequence occupies residues 1–29; sequence MARGGRGRRLGLALGLLLALVLAPRVLRA. N53 carries an N-linked (GlcNAc...) asparagine glycan. S55 is modified (phosphoserine). T76 carries the post-translational modification Phosphothreonine. EF-hand domains follow at residues 79–114, 115–150, 166–201, 203–238, 244–279, and 280–315; these read ESKERLGKIVDRIDNDGDGFVTTEELKTWIKRVQKR, YIFDNVAKVWKDYDRDKDDKISWEEYKQATYGYYLG, KMLPRDERRFKAADLNGDLTATREEFTAFLHPEEFE, MKEIVVLETLEDIDKNGDGFVDQDEYIADMFSHEEN, WVLSEREQFNEFRDLNKDGKLDKDEIRHWILPQDYD, and HAQAEARHLVYESDKNKDEKLTKEEILENWNMFVGS. Residue S80 is modified to Phosphoserine; by FAM20C. Ca(2+) contacts are provided by D92, D94, D96, E103, D128, D130, D132, K134, E139, D179, N181, D183, T185, E190, D216, N218, D220, E227, D257, N259, D261, K263, E268, D293, N295, D297, K299, and E304. The short motif at 328–331 is the Prevents secretion from ER element; it reads HDEL.

The protein belongs to the CREC family. Post-translationally, O-glycosylated. O-mannosylated by POMT1 and POMT2 and elongated by POMGNT1.

Its subcellular location is the endoplasmic reticulum lumen. Its function is as follows. May regulate calcium-dependent activities in the endoplasmic reticulum lumen or post-ER compartment. This chain is Reticulocalbin-1 (RCN1), found in Homo sapiens (Human).